The following is a 547-amino-acid chain: CAP-Gly domain-containing linker protein 3 (547 aa).

The tract at residues 1 to 49 (MTKTDPAPMAPPPRGEEEEEEEEDEPVPEAPSPTQERRQKPVVHPSAPA) is disordered. Residues 16 to 27 (EEEEEEEEDEPV) show a composition bias toward acidic residues. ANK repeat units follow at residues 117–158 (TDMT…LRSR), 160–191 (TNMN…VVNS), and 197–229 (NHGS…LRNR). A CAP-Gly 1 domain is found at 314–356 (GTTEFASGQWVGVELDEPEGKNDGSVGGVRYFICPPKQGLFAS). The disordered stretch occupies residues 365–413 (DAPPSSVTSTPRTPRMDFSRVTGKGRREHKGKKKTPSSPSLGSLQQRDG). Residues 367 to 377 (PPSSVTSTPRT) show a composition bias toward low complexity. Phosphothreonine is present on T374. Residues 387 to 399 (GKGRREHKGKKKT) show a composition bias toward basic residues. Residues 400 to 410 (PSSPSLGSLQQ) are compositionally biased toward polar residues. Phosphoserine is present on S401. A CAP-Gly 2 domain is found at 436–478 (GKTDFAPGYWYGIELDQPTGKHDGSVFGVRYFTCPPRHGVFAP). Positions 488–547 (STDSPGDSVGAKKVHQVTMTQPKRTFTTVRTPKDIASENSISRLLFCCWFPWMLRAEMQS) are goLD. Residues C534 and C535 are each lipidated (S-palmitoyl cysteine).

In terms of assembly, homodimer. Interacts with AKT1 and AKT2; when AKT1 and AKT2 are phosphorylated and activated, affinity is higher for AKT2. Interacts with ZDHHC13 (via ANK repeats). Interacts with ZDHHC17 (via ANK repeats). In terms of processing, palmitoylation by ZDHHC17 regulates association with the plasma membrane.

The protein localises to the cell membrane. The protein resides in the cytoplasm. It is found in the golgi apparatus. It localises to the golgi stack. Its function is as follows. Functions as a cytoplasmic linker protein. Involved in TGN-endosome dynamics. May modulate the cellular compartmentalization of AKT kinase family and promote its cell membrane localization, thereby playing a role in glucose transport in adipocytes. This Homo sapiens (Human) protein is CAP-Gly domain-containing linker protein 3 (CLIP3).